We begin with the raw amino-acid sequence, 110 residues long: MEWGPGSDWSRGEAAGVDRGKAGLGLGGRPPPQPPREERAQQLLDAVEQRQRQLLDTIAACEEMLRQLGRRRPEPAGGGNVSAKPGAPPQPAVSARGGFPKDAGDGAAEP.

2 disordered regions span residues 1-42 and 66-110; these read MEWG…RAQQ and RQLG…AAEP. Positions 36–68 form a coiled coil; the sequence is REERAQQLLDAVEQRQRQLLDTIAACEEMLRQL.

This is an uncharacterized protein from Homo sapiens (Human).